Reading from the N-terminus, the 140-residue chain is ATP synthase epsilon chain (140 aa).

This sequence belongs to the ATPase epsilon chain family. As to quaternary structure, F-type ATPases have 2 components, CF(1) - the catalytic core - and CF(0) - the membrane proton channel. CF(1) has five subunits: alpha(3), beta(3), gamma(1), delta(1), epsilon(1). CF(0) has three main subunits: a, b and c.

It localises to the cell inner membrane. Functionally, produces ATP from ADP in the presence of a proton gradient across the membrane. The chain is ATP synthase epsilon chain from Neisseria meningitidis serogroup C (strain 053442).